The primary structure comprises 619 residues: Eukaryotic translation initiation factor 3 subunit D (619 aa).

Residues 99–160 (QKQPHQRGRF…KWGARPPPKI (62 aa)) are disordered. A compositionally biased stretch (basic residues) spans 100–121 (KQPHQRGRFRGNLRNQRGRGRG). Residues 288–302 (EFDLLTVNETAIEPP) form an RNA gate region. Residues 588-619 (TPAATETVATATTEATTPTTATKTTAPAAAQK) form a disordered region.

This sequence belongs to the eIF-3 subunit D family. As to quaternary structure, component of the eukaryotic translation initiation factor 3 (eIF-3) complex.

It is found in the cytoplasm. MRNA cap-binding component of the eukaryotic translation initiation factor 3 (eIF-3) complex, which is involved in protein synthesis of a specialized repertoire of mRNAs and, together with other initiation factors, stimulates binding of mRNA and methionyl-tRNAi to the 40S ribosome. The eIF-3 complex specifically targets and initiates translation of a subset of mRNAs involved in cell proliferation. In the eIF-3 complex, eif3d specifically recognizes and binds the 7-methylguanosine cap of a subset of mRNAs. The polypeptide is Eukaryotic translation initiation factor 3 subunit D (Aedes aegypti (Yellowfever mosquito)).